A 256-amino-acid chain; its full sequence is 2-C-methyl-D-erythritol 4-phosphate cytidylyltransferase (256 aa).

This sequence belongs to the IspD/TarI cytidylyltransferase family. IspD subfamily.

The catalysed reaction is 2-C-methyl-D-erythritol 4-phosphate + CTP + H(+) = 4-CDP-2-C-methyl-D-erythritol + diphosphate. It participates in isoprenoid biosynthesis; isopentenyl diphosphate biosynthesis via DXP pathway; isopentenyl diphosphate from 1-deoxy-D-xylulose 5-phosphate: step 2/6. Its function is as follows. Catalyzes the formation of 4-diphosphocytidyl-2-C-methyl-D-erythritol from CTP and 2-C-methyl-D-erythritol 4-phosphate (MEP). The chain is 2-C-methyl-D-erythritol 4-phosphate cytidylyltransferase from Corynebacterium glutamicum (strain R).